The sequence spans 278 residues: 2,5-diketo-D-gluconic acid reductase A (278 aa).

Y50 acts as the Proton donor in catalysis. Residue H108 coordinates substrate. 188 to 242 is an NADP(+) binding site; that stretch reads GPLGQGKYDLFGAEPVTAAAAAHGKTPAQAVLRWHLQKGFVVFPKSVRRERLEEN. The interval 259–278 is disordered; the sequence is DAMDPGDGSGRVSAHPDEVD.

Belongs to the aldo/keto reductase family. Monomer.

It is found in the cytoplasm. The catalysed reaction is 2-dehydro-L-idonate + NADP(+) = 2,5-didehydro-D-gluconate + NADPH + H(+). With respect to regulation, inhibited by Zn(2+), Fe(3+), Cu(2+) and Ni(2+). Functionally, catalyzes the reduction of 2,5-diketo-D-gluconic acid (25DKG) to 2-keto-L-gulonic acid (2KLG). 5-keto-D-fructose and dihydroxyacetone can also serve as substrates. 25DKGR-A exhibits a greater selectivity for the substrate and higher thermal stability than 25DKGR-B. In Corynebacterium sp. (strain ATCC 31090), this protein is 2,5-diketo-D-gluconic acid reductase A (dkgA).